A 217-amino-acid chain; its full sequence is External core antigen (217 aa).

An N-terminal signal peptide occupies residues 1–20 (MYLFHLCLVFACVPCPTVQA). The HBEAG stretch occupies residues 26-28 (GWL). The disordered stretch occupies residues 166 to 217 (APILSTLPEHTVIRRRGGSRAARSPRRRTPSPRRRRSQSPRRRRSQSPASNC). Residues 178-210 (IRRRGGSRAARSPRRRTPSPRRRRSQSPRRRRS) show a composition bias toward basic residues. The 1; half-length repeat unit spans residues 189 to 195 (SPRRRTP). Residues 189 to 211 (SPRRRTPSPRRRRSQSPRRRRSQ) are 3 X 8 AA repeats of S-P-R-R-R-R-S-Q. Residues 189–217 (SPRRRTPSPRRRRSQSPRRRRSQSPASNC) constitute a propeptide that is removed on maturation. 2 repeat units span residues 196-203 (SPRRRRSQ) and 204-211 (SPRRRRSQ).

This sequence belongs to the orthohepadnavirus precore antigen family. As to quaternary structure, homodimerizes. Phosphorylated. In terms of processing, cleaved by host furin.

Its subcellular location is the secreted. The protein localises to the host nucleus. Functionally, may regulate immune response to the intracellular capsid in acting as a T-cell tolerogen, by having an immunoregulatory effect which prevents destruction of infected cells by cytotoxic T-cells. This immune regulation may predispose to chronicity during perinatal infections and prevent severe liver injury during adult infections. The protein is External core antigen of Otospermophilus beecheyi (California ground squirrel).